Here is a 322-residue protein sequence, read N- to C-terminus: Cytochrome c biogenesis protein CcsA (322 aa).

The next 6 membrane-spanning stretches (helical) occupy residues 9-29 (ILTH…LITL), 44-64 (GMIV…ASSG), 143-163 (MLLS…ILII), 226-246 (VISL…VWAN), 259-276 (ETWA…LHSR), and 289-309 (IASI…LLGI).

This sequence belongs to the CcmF/CycK/Ccl1/NrfE/CcsA family. As to quaternary structure, may interact with Ccs1.

It is found in the plastid. The protein resides in the chloroplast thylakoid membrane. Required during biogenesis of c-type cytochromes (cytochrome c6 and cytochrome f) at the step of heme attachment. This is Cytochrome c biogenesis protein CcsA from Triticum aestivum (Wheat).